The primary structure comprises 292 residues: MRDYIELTKPRITWLILMSTGIGYFFGLPQASNWLTFLKNIDLLRLLHTIIGTGLIASGTAALNQWYEREGDLKMHRTAGRPLPSGRLIAGRALAFGVALSIAGFVELWLGVNLLSAGIGAFTLASYLFLYTPMKRRTWWSTTVGAIPGAMPPVIGFAAAAGGLTRESWVLFAILFLWQFPHFYSIAWMYKEDYARAGIQMLPVVDPDCRSTARQIVIYGIALIPVSLVPALLGMSGRLYLVGALLLGLWFLYSGVRVALERTLVRARGVLITSVLYLPLIYGLMLLDRPGL.

9 helical membrane-spanning segments follow: residues 12–32 (ITWL…PQAS), 43–63 (LLRL…TAAL), 94–114 (LAFG…GVNL), 115–135 (LSAG…TPMK), 144–164 (VGAI…AGGL), 169–189 (WVLF…IAWM), 216–236 (IVIY…LGMS), 239–259 (LYLV…VRVA), and 267–287 (ARGV…LMLL).

It belongs to the UbiA prenyltransferase family. Protoheme IX farnesyltransferase subfamily.

It is found in the cell inner membrane. It carries out the reaction heme b + (2E,6E)-farnesyl diphosphate + H2O = Fe(II)-heme o + diphosphate. The protein operates within porphyrin-containing compound metabolism; heme O biosynthesis; heme O from protoheme: step 1/1. Converts heme B (protoheme IX) to heme O by substitution of the vinyl group on carbon 2 of heme B porphyrin ring with a hydroxyethyl farnesyl side group. This Solibacter usitatus (strain Ellin6076) protein is Protoheme IX farnesyltransferase.